We begin with the raw amino-acid sequence, 470 residues long: Probable V-type proton ATPase subunit H 2 (470 aa).

This sequence belongs to the V-ATPase H subunit family. In terms of assembly, V-ATPase is a heteromultimeric enzyme made up of two complexes: the ATP-hydrolytic V1 complex and the proton translocation V0 complex. The V1 complex consists of three catalytic AB heterodimers that form a heterohexamer, three peripheral stalks each consisting of EG heterodimers, one central rotor including subunits D and F, and the regulatory subunits C and H. The proton translocation complex V0 consists of the proton transport subunit a, a ring of proteolipid subunits c9c'', rotary subunit d, subunits e and f, and the accessory subunits vah-19/Ac45 and vah-20/PRR.

In terms of biological role, subunit of the V1 complex of vacuolar(H+)-ATPase (V-ATPase), a multisubunit enzyme composed of a peripheral complex (V1) that hydrolyzes ATP and a membrane integral complex (V0) that translocates protons. V-ATPase is responsible for acidifying and maintaining the pH of intracellular compartments and in some cell types, is targeted to the plasma membrane, where it is responsible for acidifying the extracellular environment. Subunit H is essential for V-ATPase activity, but not for the assembly of the complex. The chain is Probable V-type proton ATPase subunit H 2 from Caenorhabditis elegans.